The primary structure comprises 533 residues: Lysine--tRNA ligase 1 (533 aa).

The 'HIGH' region motif lies at 26–34; the sequence is PSGHIHIGN. The short motif at 272–276 is the 'KMSKS' region element; sequence AMSSS.

Belongs to the class-I aminoacyl-tRNA synthetase family.

It localises to the cytoplasm. It catalyses the reaction tRNA(Lys) + L-lysine + ATP = L-lysyl-tRNA(Lys) + AMP + diphosphate. This Methanosarcina acetivorans (strain ATCC 35395 / DSM 2834 / JCM 12185 / C2A) protein is Lysine--tRNA ligase 1.